Consider the following 439-residue polypeptide: Xylose isomerase (439 aa).

Residues histidine 101 and aspartate 104 contribute to the active site. Residues glutamate 232, glutamate 268, histidine 271, aspartate 296, aspartate 307, aspartate 309, and aspartate 339 each contribute to the Mg(2+) site.

The protein belongs to the xylose isomerase family. As to quaternary structure, homotetramer. The cofactor is Mg(2+).

Its subcellular location is the cytoplasm. It catalyses the reaction alpha-D-xylose = alpha-D-xylulofuranose. The protein is Xylose isomerase of Photorhabdus laumondii subsp. laumondii (strain DSM 15139 / CIP 105565 / TT01) (Photorhabdus luminescens subsp. laumondii).